A 275-amino-acid chain; its full sequence is 4-hydroxy-tetrahydrodipicolinate reductase (275 aa).

NAD(+) contacts are provided by residues 13–18, 108–110, and 134–137; these read GAAGKM, GTT, and APNF. Residue H164 is the Proton donor/acceptor of the active site. H165 contributes to the (S)-2,3,4,5-tetrahydrodipicolinate binding site. The Proton donor role is filled by K168. Residue 174–175 participates in (S)-2,3,4,5-tetrahydrodipicolinate binding; it reads GT.

The protein belongs to the DapB family.

It is found in the cytoplasm. The catalysed reaction is (S)-2,3,4,5-tetrahydrodipicolinate + NAD(+) + H2O = (2S,4S)-4-hydroxy-2,3,4,5-tetrahydrodipicolinate + NADH + H(+). The enzyme catalyses (S)-2,3,4,5-tetrahydrodipicolinate + NADP(+) + H2O = (2S,4S)-4-hydroxy-2,3,4,5-tetrahydrodipicolinate + NADPH + H(+). It functions in the pathway amino-acid biosynthesis; L-lysine biosynthesis via DAP pathway; (S)-tetrahydrodipicolinate from L-aspartate: step 4/4. Functionally, catalyzes the conversion of 4-hydroxy-tetrahydrodipicolinate (HTPA) to tetrahydrodipicolinate. The polypeptide is 4-hydroxy-tetrahydrodipicolinate reductase (Synechocystis sp. (strain ATCC 27184 / PCC 6803 / Kazusa)).